A 212-amino-acid polypeptide reads, in one-letter code: NADH-quinone oxidoreductase subunit I (212 aa).

4Fe-4S ferredoxin-type domains are found at residues 76–105 (RLLESENERCIGCGLCEKICTSNCIRIITD) and 115–144 (LNYSINFGRCIYCGLCAEVCPELAIVHGDL). Residues Cys85, Cys88, Cys91, Cys95, Cys124, Cys127, Cys130, and Cys134 each coordinate [4Fe-4S] cluster.

It belongs to the complex I 23 kDa subunit family. NDH-1 is composed of 14 different subunits. Subunits NuoA, H, J, K, L, M, N constitute the membrane sector of the complex. The cofactor is [4Fe-4S] cluster.

The protein localises to the cell inner membrane. It catalyses the reaction a quinone + NADH + 5 H(+)(in) = a quinol + NAD(+) + 4 H(+)(out). Functionally, NDH-1 shuttles electrons from NADH, via FMN and iron-sulfur (Fe-S) centers, to quinones in the respiratory chain. The immediate electron acceptor for the enzyme in this species is believed to be ubiquinone. Couples the redox reaction to proton translocation (for every two electrons transferred, four hydrogen ions are translocated across the cytoplasmic membrane), and thus conserves the redox energy in a proton gradient. The polypeptide is NADH-quinone oxidoreductase subunit I (Helicobacter hepaticus (strain ATCC 51449 / 3B1)).